Reading from the N-terminus, the 297-residue chain is Bifunctional protein FolD (297 aa).

Residues 169–171 (GRS), serine 196, and isoleucine 237 each bind NADP(+).

This sequence belongs to the tetrahydrofolate dehydrogenase/cyclohydrolase family. As to quaternary structure, homodimer.

The catalysed reaction is (6R)-5,10-methylene-5,6,7,8-tetrahydrofolate + NADP(+) = (6R)-5,10-methenyltetrahydrofolate + NADPH. It catalyses the reaction (6R)-5,10-methenyltetrahydrofolate + H2O = (6R)-10-formyltetrahydrofolate + H(+). It participates in one-carbon metabolism; tetrahydrofolate interconversion. In terms of biological role, catalyzes the oxidation of 5,10-methylenetetrahydrofolate to 5,10-methenyltetrahydrofolate and then the hydrolysis of 5,10-methenyltetrahydrofolate to 10-formyltetrahydrofolate. The sequence is that of Bifunctional protein FolD from Salinibacter ruber (strain DSM 13855 / M31).